Reading from the N-terminus, the 144-residue chain is Protein E6 (144 aa).

2 zinc fingers span residues 33-69 and 105-140; these read CKFCGNNITNIEKLLFDKAGFQLIWRENNAFGCCQYC and CLGCLSILSEADKELCAELNDFSVVRGKTRGLCSLC.

It belongs to the papillomaviridae E6 protein family. Forms homodimers. Interacts with ubiquitin-protein ligase UBE3A/E6-AP; this interaction stimulates UBE3A ubiquitin activity. Interacts with host BAK1.

The protein resides in the host cytoplasm. Its subcellular location is the host nucleus. In terms of biological role, plays a major role in the induction and maintenance of cellular transformation. E6 associates with host UBE3A/E6-AP ubiquitin-protein ligase and modulates its activity. Protects host keratinocytes from apoptosis by mediating the degradation of host BAK1. May also inhibit host immune response. This chain is Protein E6, found in Canine oral papillomavirus (strain Y62) (COPV).